We begin with the raw amino-acid sequence, 21 residues long: DLWSWGQMIQETGLLPSYTTY.

This sequence belongs to the phospholipase A2 family. Group II subfamily. As to quaternary structure, can form dimers, trimers and tetramers. Ca(2+) serves as cofactor. Post-translationally, contains seven disulfide bonds. As to expression, expressed by the venom gland.

It is found in the secreted. It carries out the reaction a 1,2-diacyl-sn-glycero-3-phosphocholine + H2O = a 1-acyl-sn-glycero-3-phosphocholine + a fatty acid + H(+). Inhibited by crotapotin. Its function is as follows. Snake venom phospholipase A2 has a high enzymatic activity and produces moderate myonecrosis in skeletal muscle, but shows no neuromuscular activity in mouse phrenic nerve-diaphragm preparations. PLA2 catalyzes the calcium-dependent hydrolysis of the 2-acyl groups in 3-sn-phosphoglycerides. This is Basic phospholipase A2 BjIV from Bothrops jararacussu (Jararacussu).